A 352-amino-acid chain; its full sequence is Heavy metal-associated isoprenylated plant protein 36 (352 aa).

Residues Tyr-29 to Glu-92 enclose the HMA domain. The a metal cation site is built by Cys-40 and Cys-43. 3 disordered regions span residues Thr-96–Asp-150, Gln-162–Glu-211, and Pro-229–Pro-252. Residues Ser-97 to Asn-107 show a composition bias toward polar residues. The span at Glu-118–Asn-128 shows a compositional bias: acidic residues. A compositionally biased stretch (gly residues) spans Asn-133–Asn-148. A compositionally biased stretch (basic residues) spans Lys-172–Ser-183. The segment covering Glu-192–Pro-203 has biased composition (gly residues). Cys-349 is modified (cysteine methyl ester). Cys-349 carries S-farnesyl cysteine lipidation. A propeptide spans Cys-350–Met-352 (removed in mature form).

This sequence belongs to the HIPP family.

Functionally, heavy-metal-binding protein. The sequence is that of Heavy metal-associated isoprenylated plant protein 36 from Arabidopsis thaliana (Mouse-ear cress).